A 267-amino-acid polypeptide reads, in one-letter code: Tryptophan synthase alpha chain (267 aa).

Residues Glu49 and Asp60 each act as proton acceptor in the active site.

This sequence belongs to the TrpA family. In terms of assembly, tetramer of two alpha and two beta chains.

It carries out the reaction (1S,2R)-1-C-(indol-3-yl)glycerol 3-phosphate + L-serine = D-glyceraldehyde 3-phosphate + L-tryptophan + H2O. The protein operates within amino-acid biosynthesis; L-tryptophan biosynthesis; L-tryptophan from chorismate: step 5/5. In terms of biological role, the alpha subunit is responsible for the aldol cleavage of indoleglycerol phosphate to indole and glyceraldehyde 3-phosphate. The chain is Tryptophan synthase alpha chain from Geotalea uraniireducens (strain Rf4) (Geobacter uraniireducens).